A 406-amino-acid polypeptide reads, in one-letter code: UPF0754 membrane protein CYB_2931 (406 aa).

Helical transmembrane passes span 1 to 21 (MAFW…YFTN) and 385 to 405 (IVNL…LFLL).

This sequence belongs to the UPF0754 family.

It localises to the cell inner membrane. The chain is UPF0754 membrane protein CYB_2931 from Synechococcus sp. (strain JA-2-3B'a(2-13)) (Cyanobacteria bacterium Yellowstone B-Prime).